The sequence spans 432 residues: Adenosylhomocysteinase (432 aa).

S2 is subject to N-acetylserine. The substrate site is built by T57, D131, and E156. Residue S183 is modified to Phosphoserine. Residues 183 to 350 are NAD binding; the sequence is SVTKSKFDNL…EGRLVNLGCA (168 aa). Substrate-binding residues include K186 and D190. Residue K186 is modified to N6-(2-hydroxyisobutyryl)lysine. Y193 carries the post-translational modification Phosphotyrosine.

The protein belongs to the adenosylhomocysteinase family. As to quaternary structure, homotetramer. Interaction with AHCYL1. NAD(+) serves as cofactor.

It is found in the cytoplasm. The protein resides in the melanosome. The protein localises to the nucleus. It localises to the endoplasmic reticulum. The catalysed reaction is S-adenosyl-L-homocysteine + H2O = L-homocysteine + adenosine. Its pathway is amino-acid biosynthesis; L-homocysteine biosynthesis; L-homocysteine from S-adenosyl-L-homocysteine: step 1/1. Catalyzes the hydrolysis of S-adenosyl-L-homocysteine to form adenosine and homocysteine. Binds copper ions. This is Adenosylhomocysteinase (AHCY) from Bos taurus (Bovine).